The sequence spans 340 residues: Phenylalanine--tRNA ligase alpha subunit (340 aa).

E255 lines the Mg(2+) pocket.

This sequence belongs to the class-II aminoacyl-tRNA synthetase family. Phe-tRNA synthetase alpha subunit type 1 subfamily. Tetramer of two alpha and two beta subunits. Mg(2+) is required as a cofactor.

The protein resides in the cytoplasm. It carries out the reaction tRNA(Phe) + L-phenylalanine + ATP = L-phenylalanyl-tRNA(Phe) + AMP + diphosphate + H(+). The chain is Phenylalanine--tRNA ligase alpha subunit from Heliobacterium modesticaldum (strain ATCC 51547 / Ice1).